The sequence spans 1342 residues: MVYSYTEKKRIRKDFGKRPQVLDIPYLLSIQLDSFQKFIEQDPEGQHGLEAAFRSVFPIKSYSGNSELQYVSYRLGEPVFDVKECQIRGVTFSAPLRVKLRLVIYEREAPEGTVKDIKEQEVYMGEIPLMTDNGTFVINGTERVIVSQLHRSPGVFFDSDKGKTHSSGKVLYNARIIPYRGSWLDFEFDPKDNLFVRIDRRRKLPATIILRALGYSTAQILDLFFDKIVYEINGNKLQMDLVPERLRGETASFDIEANGKVYIEKGRRITARHIRQLEKDSIERIEVPVEYIAGKVLSKDYIDESTGELIGAANMELSLDLLAKLSQSGHKRIETLFTNDLDHGAYMSETVRVDPSSDRLSALVEIYRMMRPGEPPTREAAETLFENLFFSEDRYDLSAVGRMKFNRSLLRDEIEGSGILSKDDIIEVMKKLIDIRNGKGEVDDIDHLGNRRIRSVGEMAENQFRVGLVRVERAVKERLSLGDLDTLMPQDMINAKPISAAVKEFFGSSQLSQFMDQNNPLSEITHKRRISALGPGGLTRERAGFEVRDVHPTHYGRVCPIETPEGPNIGLINSLSVYAQTNEYGFLETPYRRVRENVVTDEIHYLSAIEEGNFVIAQANTNLDEEGRFIDELVTCRNKGESSLFSRDQVEYMDVSTQQIVSVGASLIPFLEHDDANRALMGANMQRQAVPTLRADKPLVGTGMERAVAVDSGVTAVAKRGGTVQYVDASRIVIRVNDDEMYPGEAGIDIYNLTKYTRSNQNTCISQMPCVSLGEPVERGDVLADGPSTDLGELALGQNMRVAFMPWNGYNFEDSILVSERVVQEDRFTTIHIQELACVSRDTKLGPEEITADIPNVGEAALSKLDESGIVYIGAEVTGGDILVGKVTPKGETQLTPEEKLLRAIFGEKASDVKDSSLRVPNGVSGTIIDVQVFTRDGVEKDKRALEIEEMQLKQAKKDLTEELQILEAGLFGRIHAVLVSGGVEADKLDKLPRERWLELGLTDEDKQNQLEQLAEQYDELKHEFEKKLEAKRRKITQGDDLAPGVLKIVKVYLAVKRQIQPGDKMAGRHGNKGVISKINPIEDMPYDENGTPVDIVLNPLGVPSRMNIGQILETHLGMAAKGIGEKINAMLKQHEEVTKLREFIQRAYDLGDDLRQKVDLSTFSDEEVMRLAENLKKGMPIATPVFDGAKEKEIKELLQMGGIPTSGQITLYDGRTGEQFERQVTVGYMYMLKLNHLVDDKMHARSTGSYSLVTQQPLGGKAQFGGQRFGEMEVWALEAYGAAYTLQEMLTVKSDDVNGRTKMYKNIVDGNHQMEPGMPESFNVLLKEIRSLGINIELEEK.

The protein belongs to the RNA polymerase beta chain family. The RNAP catalytic core consists of 2 alpha, 1 beta, 1 beta' and 1 omega subunit. When a sigma factor is associated with the core the holoenzyme is formed, which can initiate transcription.

It carries out the reaction RNA(n) + a ribonucleoside 5'-triphosphate = RNA(n+1) + diphosphate. DNA-dependent RNA polymerase catalyzes the transcription of DNA into RNA using the four ribonucleoside triphosphates as substrates. This Pectobacterium atrosepticum (strain SCRI 1043 / ATCC BAA-672) (Erwinia carotovora subsp. atroseptica) protein is DNA-directed RNA polymerase subunit beta.